A 314-amino-acid chain; its full sequence is MTKNPKISLIGSGNIGGTLAHLISLKKLGDIVLFDVAEGVPQGKALDIMQAATIAGADIKIKGTNNYKDIEGSDAVIITAGLPRKPGMSRDDLISVNTKIMQDVAQNIKKYARNAFVIVITNPLDIMVYVMLKESGLPHNKVIGMAGVLDSSRFNLFLAEEFKVSVRNVNSIVLGGHGDAMVPLVRYSTISGVPIPDLIKMGLSSNKNIEKIIDRTRNGGGEIVALLKTGSAYYAPAASAIAMLESYLKDKRQILTCAAYLQGEYDVHDLYIGVPIIIGKEGVIKVIELQLTEEEKILFDKSVVGVKKLIDAIQ.

Residues 11–16 and Asp-35 contribute to the NAD(+) site; that span reads GSGNIG. Substrate is bound by residues Arg-84 and Arg-90. NAD(+) contacts are provided by residues Asn-97 and 120–122; that span reads ITN. Substrate is bound by residues Asn-122 and Arg-153. His-177 functions as the Proton acceptor in the catalytic mechanism.

The protein belongs to the LDH/MDH superfamily. MDH type 3 family.

It catalyses the reaction (S)-malate + NAD(+) = oxaloacetate + NADH + H(+). Functionally, catalyzes the reversible oxidation of malate to oxaloacetate. The polypeptide is Malate dehydrogenase (Rickettsia typhi (strain ATCC VR-144 / Wilmington)).